The following is a 590-amino-acid chain: NADH-ubiquinone oxidoreductase chain 5 (590 aa).

18 helical membrane-spanning segments follow: residues 1 to 21 (MFLIFFLFFIMFGFISGSFMF), 28 to 48 (FWLSLVMIIFIVLCMIFSFLM), 58 to 78 (YYDFCLILMLDFCFIWLTYVC), 81 to 101 (FYMFIMLLINMVFCFIVFYAF), 113 to 133 (FLIIFWIFVVCMNLFILSYDF), 136 to 156 (AYCGWELLGLFSFFLISYFWY), 176 to 198 (VLLIFAFSIIFLSNGFCMTTFYF), 245 to 265 (ALIHAATLVVCGIILLSFVYW), 273 to 293 (YFYNLIGWSTLILILMTLCVF), 310 to 330 (ISFSMFCCLCIDIYIGSLFFC), 333 to 353 (MFYKATLFIVLGIWIHIFFGL), 372 to 392 (LLLIFAILNSCSIWFLCGFYC), 395 to 415 (MLLALLMLLSFYNIIEFLFIS), 428 to 450 (FLLFFLMFVFKCFCLVDCLFLLF), 461 to 481 (ISLYMCILSIFFIIDFVCIFV), 501 to 521 (IAIFVVFLILSVGFLYYGCLF), 536 to 556 (IFFVIIILVVFMIFCCWYFVC), and 568 to 588 (FVIYFRYNLKYCLFFCILWIL).

It belongs to the complex I subunit 5 family.

Its subcellular location is the mitochondrion inner membrane. It catalyses the reaction a ubiquinone + NADH + 5 H(+)(in) = a ubiquinol + NAD(+) + 4 H(+)(out). Core subunit of the mitochondrial membrane respiratory chain NADH dehydrogenase (Complex I) that is believed to belong to the minimal assembly required for catalysis. Complex I functions in the transfer of electrons from NADH to the respiratory chain. The immediate electron acceptor for the enzyme is believed to be ubiquinone. The polypeptide is NADH-ubiquinone oxidoreductase chain 5 (ND5) (Trypanosoma brucei brucei).